A 365-amino-acid chain; its full sequence is Protein RecA (365 aa).

ATP is bound at residue 77–84 (GPESSGKT).

It belongs to the RecA family.

It is found in the cytoplasm. Can catalyze the hydrolysis of ATP in the presence of single-stranded DNA, the ATP-dependent uptake of single-stranded DNA by duplex DNA, and the ATP-dependent hybridization of homologous single-stranded DNAs. It interacts with LexA causing its activation and leading to its autocatalytic cleavage. This Mesorhizobium japonicum (strain LMG 29417 / CECT 9101 / MAFF 303099) (Mesorhizobium loti (strain MAFF 303099)) protein is Protein RecA.